Here is a 613-residue protein sequence, read N- to C-terminus: Kelch-like protein 36 (613 aa).

The 68-residue stretch at 45–112 (CDVVLVVEEQ…LYSSELELDG (68 aa)) folds into the BTB domain. The region spanning 147-249 (YLYLQELASI…PEDILLQRVK (103 aa)) is the BACK domain. 6 Kelch repeats span residues 294-343 (CLLF…VLGG), 344-395 (FIFI…SIED), 396-442 (MLVA…IYKD), 444-491 (VYIS…SLGD), 492-544 (SIYS…VWQG), and 545-593 (RIYI…VCAL).

Interacts with CUL3.

It participates in protein modification; protein ubiquitination. Functionally, probable substrate-specific adapter of an E3 ubiquitin-protein ligase complex which mediates the ubiquitination and subsequent proteasomal degradation of target proteins. This Mus musculus (Mouse) protein is Kelch-like protein 36 (Klhl36).